The sequence spans 114 residues: Large ribosomal subunit protein P2 (114 aa).

Residues 84 to 114 (TDALQAGSKKGETKEGPKEESDEDMGFGLFD) are disordered. The segment covering 92–102 (KKGETKEGPKE) has biased composition (basic and acidic residues).

This sequence belongs to the eukaryotic ribosomal protein P1/P2 family. In terms of assembly, P1 and P2 exist as dimers at the large ribosomal subunit. Post-translationally, phosphorylated.

In terms of biological role, plays an important role in the elongation step of protein synthesis. This is Large ribosomal subunit protein P2 (rpp-2) from Brugia malayi (Filarial nematode worm).